The chain runs to 90 residues: Cell division topological specificity factor (90 aa).

It belongs to the MinE family.

In terms of biological role, prevents the cell division inhibition by proteins MinC and MinD at internal division sites while permitting inhibition at polar sites. This ensures cell division at the proper site by restricting the formation of a division septum at the midpoint of the long axis of the cell. This Brucella abortus (strain S19) protein is Cell division topological specificity factor.